The primary structure comprises 181 residues: ATP synthase subunit b (181 aa).

The helical transmembrane segment at 12–32 (LPAVYDIVWSAVVFVVLLVVI) threads the bilayer.

The protein belongs to the ATPase B chain family. As to quaternary structure, F-type ATPases have 2 components, F(1) - the catalytic core - and F(0) - the membrane proton channel. F(1) has five subunits: alpha(3), beta(3), gamma(1), delta(1), epsilon(1). F(0) has three main subunits: a(1), b(2) and c(10-14). The alpha and beta chains form an alternating ring which encloses part of the gamma chain. F(1) is attached to F(0) by a central stalk formed by the gamma and epsilon chains, while a peripheral stalk is formed by the delta and b chains.

It is found in the cell membrane. F(1)F(0) ATP synthase produces ATP from ADP in the presence of a proton or sodium gradient. F-type ATPases consist of two structural domains, F(1) containing the extramembraneous catalytic core and F(0) containing the membrane proton channel, linked together by a central stalk and a peripheral stalk. During catalysis, ATP synthesis in the catalytic domain of F(1) is coupled via a rotary mechanism of the central stalk subunits to proton translocation. Functionally, component of the F(0) channel, it forms part of the peripheral stalk, linking F(1) to F(0). The protein is ATP synthase subunit b of Clavibacter sepedonicus (Clavibacter michiganensis subsp. sepedonicus).